The primary structure comprises 648 residues: FAD-binding monooxygenase trt3 (648 aa).

FAD-binding positions include 118–121, 130–131, and tyrosine 136; these read TWYW and DI. 128-130 is a binding site for NADP(+); the sequence is MCD. NADP(+) contacts are provided by residues 274–280 and 297–298; these read TGSTAVQ and RT.

The protein belongs to the FAD-binding monooxygenase family. It depends on FAD as a cofactor.

It participates in secondary metabolite biosynthesis; terpenoid biosynthesis. Functionally, FAD-binding monooxygenase; part of the gene cluster that mediates the biosynthesis of terretonin, a fungal meroterpenoid that acts as a mycotoxin. The first step of the pathway is the synthesis of 3,5-dimethylorsellinic acid (DMOA) by the polyketide synthase trt4. DMOA is then prenylated into farnesyl-DMOA by the polyprenyl transferase trt2. Methylation by the methyltransferase trt5 then leads to farnesyl-DMOA methyl ester which is further subject to epoxidation by the FAD-dependent monooxygenase trt8 to yield epoxyfarnesyl-DMOA methyl ester. Cyclization of epoxyfarnesyl-DMOA methyl ester by the terpene cyclase trt1 leads to a tetracycle intermediate which is in turn converted to preterretonin. Dehydrogenase trt9 comes next to transform preterretonin to preterrenoid. The FAD-dependent monooxygenase trt3 is then required for the C-hydroxylation at C16 of preterrenoid to yield terrenoid. The cytochrome P450 trt6 catalyzes three successive oxidations to transform terrenoid into an unstable intermediate, which then undergoes the D-ring expansion and unusual rearrangement of the methoxy group to afford the core skeleton of terretonin. Trt14 catalyzes the D-ring expansion of terretonin involving intramolecular methoxy rearrangement as well as the hydrolysis of the expanded D-ring and the methyl ester moiety. Finally, the nonheme iron-dependent dioxygenase trt7 accomplishes the last two oxidation reactions steps to complete the biosynthesis of terretonin. Terretonin C is produced via spontaneous decarboxylation of the terretonin precursor. Another shunt product of the terretonin biosynthesis is dihydrofarnesyl-DMOA, derived from epoxyfarnesyl-DMOA through hydrolysis of the epoxide. The protein is FAD-binding monooxygenase trt3 of Aspergillus terreus (strain NIH 2624 / FGSC A1156).